Reading from the N-terminus, the 507-residue chain is Dihydrolipoyl dehydrogenase 2, mitochondrial (507 aa).

The N-terminal 36 residues, 1–36 (MAMASLARRKAYFLTRNISNSPTDAFRFSFSLTRGF), are a transit peptide targeting the mitochondrion. FAD contacts are provided by residues 73–82 (EKRGALGGTC), Lys-91, Gly-155, and 184–186 (TGS). Cys-82 and Cys-87 are disulfide-bonded. NAD(+)-binding positions include 221-228 (GAGYIGLE), Glu-244, Val-278, and Gly-313. Residues Asp-354 and 360–363 (MLAH) contribute to the FAD site. His-486 acts as the Proton acceptor in catalysis.

The protein belongs to the class-I pyridine nucleotide-disulfide oxidoreductase family. Homodimer. Part of both the glycine cleavage system composed of four proteins: P, T, L and H and of the pyruvate dehydrogenase complex containing multiple copies of three enzymatic components: pyruvate dehydrogenase (E1), dihydrolipoamide acetyltransferase (E2) and lipoamide dehydrogenase (E3). Requires FAD as cofactor. S-nytrosylated at unknown positions. As to expression, preferentially expressed in roots, flowers and siliques and at a lower level in stems and leaves.

The protein resides in the mitochondrion matrix. The catalysed reaction is N(6)-[(R)-dihydrolipoyl]-L-lysyl-[protein] + NAD(+) = N(6)-[(R)-lipoyl]-L-lysyl-[protein] + NADH + H(+). Its function is as follows. Lipoamide dehydrogenase is a component of the glycine decarboxylase (GDC) or glycine cleavage system as well as of the alpha-ketoacid dehydrogenase complexes. LPD1 is probably the protein most often associated with the glycine decarboxylase complex while LPD2 is probably incorporated into alpha-ketoacid dehydrogenase complexes. The polypeptide is Dihydrolipoyl dehydrogenase 2, mitochondrial (LPD2) (Arabidopsis thaliana (Mouse-ear cress)).